Here is a 252-residue protein sequence, read N- to C-terminus: 2-succinyl-6-hydroxy-2,4-cyclohexadiene-1-carboxylate synthase (252 aa).

The protein belongs to the AB hydrolase superfamily. MenH family. In terms of assembly, monomer.

The enzyme catalyses 5-enolpyruvoyl-6-hydroxy-2-succinyl-cyclohex-3-ene-1-carboxylate = (1R,6R)-6-hydroxy-2-succinyl-cyclohexa-2,4-diene-1-carboxylate + pyruvate. It functions in the pathway quinol/quinone metabolism; 1,4-dihydroxy-2-naphthoate biosynthesis; 1,4-dihydroxy-2-naphthoate from chorismate: step 3/7. Its pathway is quinol/quinone metabolism; menaquinone biosynthesis. Functionally, catalyzes a proton abstraction reaction that results in 2,5-elimination of pyruvate from 2-succinyl-5-enolpyruvyl-6-hydroxy-3-cyclohexene-1-carboxylate (SEPHCHC) and the formation of 2-succinyl-6-hydroxy-2,4-cyclohexadiene-1-carboxylate (SHCHC). This is 2-succinyl-6-hydroxy-2,4-cyclohexadiene-1-carboxylate synthase from Escherichia coli (strain ATCC 8739 / DSM 1576 / NBRC 3972 / NCIMB 8545 / WDCM 00012 / Crooks).